Here is a 98-residue protein sequence, read N- to C-terminus: Small ribosomal subunit protein uS19 (98 aa).

2 disordered regions span residues 1–30 and 78–98; these read MARS…KKSV and RTFH…PAKK. Residues 9–24 show a composition bias toward basic and acidic residues; the sequence is PFADKHLTKKVEDANK.

This sequence belongs to the universal ribosomal protein uS19 family.

Functionally, protein S19 forms a complex with S13 that binds strongly to the 16S ribosomal RNA. The sequence is that of Small ribosomal subunit protein uS19 from Anaeromyxobacter dehalogenans (strain 2CP-C).